Reading from the N-terminus, the 425-residue chain is Serine--tRNA ligase (425 aa).

230–232 lines the L-serine pocket; the sequence is TAE. 261 to 263 provides a ligand contact to ATP; it reads RSE. Glutamate 284 contacts L-serine. Position 348-351 (348-351) interacts with ATP; sequence EISS. Serine 384 serves as a coordination point for L-serine.

The protein belongs to the class-II aminoacyl-tRNA synthetase family. Type-1 seryl-tRNA synthetase subfamily. In terms of assembly, homodimer. The tRNA molecule binds across the dimer.

It localises to the cytoplasm. It catalyses the reaction tRNA(Ser) + L-serine + ATP = L-seryl-tRNA(Ser) + AMP + diphosphate + H(+). The catalysed reaction is tRNA(Sec) + L-serine + ATP = L-seryl-tRNA(Sec) + AMP + diphosphate + H(+). Its pathway is aminoacyl-tRNA biosynthesis; selenocysteinyl-tRNA(Sec) biosynthesis; L-seryl-tRNA(Sec) from L-serine and tRNA(Sec): step 1/1. Catalyzes the attachment of serine to tRNA(Ser). Is also able to aminoacylate tRNA(Sec) with serine, to form the misacylated tRNA L-seryl-tRNA(Sec), which will be further converted into selenocysteinyl-tRNA(Sec). This chain is Serine--tRNA ligase, found in Streptococcus pyogenes serotype M6 (strain ATCC BAA-946 / MGAS10394).